A 365-amino-acid polypeptide reads, in one-letter code: Short-chain dehydrogenase iccH (365 aa).

Residues L16, R52, and D70 each coordinate NADP(+). The N-linked (GlcNAc...) asparagine glycan is linked to N90. 4 residues coordinate NADP(+): N102, Y221, K225, and S260. The active-site Proton donor is the Y221. K225 functions as the Lowers pKa of active site Tyr in the catalytic mechanism. Residues 267–287 (IWVMFLLMKFVLPLLAPLAVW) traverse the membrane as a helical segment. N291 and N324 each carry an N-linked (GlcNAc...) asparagine glycan.

This sequence belongs to the short-chain dehydrogenases/reductases (SDR) family.

Its subcellular location is the membrane. It participates in mycotoxin biosynthesis. NADH-dependent flavin oxidoreductase; part of the gene cluster that mediates the biosynthesis of ilicicolin H, a 4-hydroxy-2-pyridonealkaloid that has potent and broad antifungal activities by inhibiting the mitochondrial respiration chain. IccA to iccE are sufficient for ilicicolin H biosynthesis and the roles of the remaining enzymes, iccF, iccG and iccH within the pathway have still to be determined. The biosynthesis of ilicicolin H starts with formation of the tetramic acid by the hybrid PKS-NRPS synthetase iccA with the partnering trans-enoyl reductase iccB since iccA lacks a designated enoylreductase (ER) domain. The cytochrome P450 monooxygenase iccC then catalyzes the ring expansion of the tetramate to the acyclic 2-pyridone. The pericyclase iccD further converts the acyclic 2-pyridone into 8-epi-ilicicolin H. Finally, the epimerase iccE converts 8-epi-ilicicolin H into ilicicolin H via epimerizationd. This chain is Short-chain dehydrogenase iccH, found in Talaromyces variabilis (Penicillium variabile).